A 220-amino-acid chain; its full sequence is GTP cyclohydrolase 1 (220 aa).

Zn(2+)-binding residues include Cys-109, His-112, and Cys-180.

This sequence belongs to the GTP cyclohydrolase I family. As to quaternary structure, toroid-shaped homodecamer, composed of two pentamers of five dimers.

It carries out the reaction GTP + H2O = 7,8-dihydroneopterin 3'-triphosphate + formate + H(+). Its pathway is cofactor biosynthesis; 7,8-dihydroneopterin triphosphate biosynthesis; 7,8-dihydroneopterin triphosphate from GTP: step 1/1. This is GTP cyclohydrolase 1 from Yersinia pseudotuberculosis serotype O:1b (strain IP 31758).